Consider the following 66-residue polypeptide: Ejaculatory bulb-specific protein 2 (66 aa).

Residues 1 to 20 form the signal peptide; the sequence is MIRILVLMITFTLMTGSALC.

Specifically expressed in the ejaculatory bulb and seminal fluid.

The protein resides in the secreted. In terms of biological role, protein component of the posterior mating plug. The sequence is that of Ejaculatory bulb-specific protein 2 from Drosophila melanogaster (Fruit fly).